The sequence spans 286 residues: ATP phosphoribosyltransferase (286 aa).

Belongs to the ATP phosphoribosyltransferase family. Long subfamily. The cofactor is Mg(2+).

It is found in the cytoplasm. The enzyme catalyses 1-(5-phospho-beta-D-ribosyl)-ATP + diphosphate = 5-phospho-alpha-D-ribose 1-diphosphate + ATP. It functions in the pathway amino-acid biosynthesis; L-histidine biosynthesis; L-histidine from 5-phospho-alpha-D-ribose 1-diphosphate: step 1/9. Its activity is regulated as follows. Feedback inhibited by histidine. In terms of biological role, catalyzes the condensation of ATP and 5-phosphoribose 1-diphosphate to form N'-(5'-phosphoribosyl)-ATP (PR-ATP). Has a crucial role in the pathway because the rate of histidine biosynthesis seems to be controlled primarily by regulation of HisG enzymatic activity. The sequence is that of ATP phosphoribosyltransferase from Cytophaga hutchinsonii (strain ATCC 33406 / DSM 1761 / CIP 103989 / NBRC 15051 / NCIMB 9469 / D465).